Consider the following 420-residue polypeptide: Tryptophan synthase beta chain (420 aa).

N6-(pyridoxal phosphate)lysine is present on Lys99.

This sequence belongs to the TrpB family. Tetramer of two alpha and two beta chains. Requires pyridoxal 5'-phosphate as cofactor.

It carries out the reaction (1S,2R)-1-C-(indol-3-yl)glycerol 3-phosphate + L-serine = D-glyceraldehyde 3-phosphate + L-tryptophan + H2O. It participates in amino-acid biosynthesis; L-tryptophan biosynthesis; L-tryptophan from chorismate: step 5/5. Its function is as follows. The beta subunit is responsible for the synthesis of L-tryptophan from indole and L-serine. The sequence is that of Tryptophan synthase beta chain from Helicobacter hepaticus (strain ATCC 51449 / 3B1).